A 90-amino-acid chain; its full sequence is uncharacterized protein (90 aa).

The helical transmembrane segment at 46–62 (MALLVVFLVSLFACTTI) threads the bilayer.

It localises to the membrane. This is an uncharacterized protein from Haemophilus influenzae (strain ATCC 51907 / DSM 11121 / KW20 / Rd).